The primary structure comprises 77 residues: U8-lycotoxin-Ls1q (77 aa).

The first 20 residues, 1–20, serve as a signal peptide directing secretion; sequence MKLMIFAGLVLFAIVSLIEA. A propeptide spanning residues 21–26 is cleaved from the precursor; that stretch reads QAEHEK.

It belongs to the neurotoxin 19 (CSTX) family. 08 (U8-Lctx) subfamily. In terms of processing, contains 4 disulfide bonds. As to expression, expressed by the venom gland.

Its subcellular location is the secreted. The sequence is that of U8-lycotoxin-Ls1q from Lycosa singoriensis (Wolf spider).